Here is a 136-residue protein sequence, read N- to C-terminus: Keratin-associated protein 4-2 (136 aa).

Repeat copies occupy residues 5–9, 20–24, 25–29, 30–34, 35–39, 40–44, 45–49, 50–54, 55–59, 60–64, 65–69, 70–74, 75–79, 80–84, 90–94, 95–99, 100–104, 110–114, 120–124, and 125–129. The tract at residues 5-129 is 20 X 5 AA repeats OF C-C-[GRQVS]-[SPT]-[VSTQ]; sequence CCGSVCSDQG…CCVSTCCRPT (125 aa).

Belongs to the KRTAP type 4 family. Interacts with hair keratins.

Functionally, in the hair cortex, hair keratin intermediate filaments are embedded in an interfilamentous matrix, consisting of hair keratin-associated proteins (KRTAP), which are essential for the formation of a rigid and resistant hair shaft through their extensive disulfide bond cross-linking with abundant cysteine residues of hair keratins. The matrix proteins include the high-sulfur and high-glycine-tyrosine keratins. This Homo sapiens (Human) protein is Keratin-associated protein 4-2 (KRTAP4-2).